The following is a 272-amino-acid chain: 2,3,4,5-tetrahydropyridine-2,6-dicarboxylate N-succinyltransferase (272 aa).

2 residues coordinate substrate: Arg104 and Asp141.

Belongs to the transferase hexapeptide repeat family. As to quaternary structure, homotrimer.

It localises to the cytoplasm. The enzyme catalyses (S)-2,3,4,5-tetrahydrodipicolinate + succinyl-CoA + H2O = (S)-2-succinylamino-6-oxoheptanedioate + CoA. It functions in the pathway amino-acid biosynthesis; L-lysine biosynthesis via DAP pathway; LL-2,6-diaminopimelate from (S)-tetrahydrodipicolinate (succinylase route): step 1/3. The chain is 2,3,4,5-tetrahydropyridine-2,6-dicarboxylate N-succinyltransferase from Alkalilimnicola ehrlichii (strain ATCC BAA-1101 / DSM 17681 / MLHE-1).